A 646-amino-acid polypeptide reads, in one-letter code: 1-deoxy-D-xylulose-5-phosphate synthase (646 aa).

Residues His86 and 127-129 contribute to the thiamine diphosphate site; that span reads AHS. Residue Asp158 coordinates Mg(2+). Thiamine diphosphate-binding positions include 159 to 160, Asn188, Tyr295, and Glu377; that span reads GA. A Mg(2+)-binding site is contributed by Asn188.

The protein belongs to the transketolase family. DXPS subfamily. In terms of assembly, homodimer. Requires Mg(2+) as cofactor. It depends on thiamine diphosphate as a cofactor.

The catalysed reaction is D-glyceraldehyde 3-phosphate + pyruvate + H(+) = 1-deoxy-D-xylulose 5-phosphate + CO2. It functions in the pathway metabolic intermediate biosynthesis; 1-deoxy-D-xylulose 5-phosphate biosynthesis; 1-deoxy-D-xylulose 5-phosphate from D-glyceraldehyde 3-phosphate and pyruvate: step 1/1. In terms of biological role, catalyzes the acyloin condensation reaction between C atoms 2 and 3 of pyruvate and glyceraldehyde 3-phosphate to yield 1-deoxy-D-xylulose-5-phosphate (DXP). The polypeptide is 1-deoxy-D-xylulose-5-phosphate synthase (Burkholderia cenocepacia (strain HI2424)).